Reading from the N-terminus, the 311-residue chain is ADP-L-glycero-D-manno-heptose-6-epimerase (311 aa).

NADP(+)-binding positions include 10 to 11 (FI), 31 to 32 (DD), lysine 38, lysine 53, 75 to 79 (EGACS), and asparagine 92. Tyrosine 139 functions as the Proton acceptor in the catalytic mechanism. Residue lysine 143 participates in NADP(+) binding. Asparagine 174 provides a ligand contact to substrate. NADP(+) contacts are provided by valine 175 and lysine 183. Lysine 183 (proton acceptor) is an active-site residue. Substrate-binding positions include serine 185, histidine 192, 206–209 (FEGE), arginine 212, and tyrosine 275.

Belongs to the NAD(P)-dependent epimerase/dehydratase family. HldD subfamily. In terms of assembly, homopentamer. NADP(+) is required as a cofactor.

It catalyses the reaction ADP-D-glycero-beta-D-manno-heptose = ADP-L-glycero-beta-D-manno-heptose. Its pathway is nucleotide-sugar biosynthesis; ADP-L-glycero-beta-D-manno-heptose biosynthesis; ADP-L-glycero-beta-D-manno-heptose from D-glycero-beta-D-manno-heptose 7-phosphate: step 4/4. Its function is as follows. Catalyzes the interconversion between ADP-D-glycero-beta-D-manno-heptose and ADP-L-glycero-beta-D-manno-heptose via an epimerization at carbon 6 of the heptose. The protein is ADP-L-glycero-D-manno-heptose-6-epimerase of Psychromonas ingrahamii (strain DSM 17664 / CCUG 51855 / 37).